A 112-amino-acid chain; its full sequence is Peptidyl-tRNA hydrolase (112 aa).

It belongs to the PTH2 family.

It localises to the cytoplasm. It catalyses the reaction an N-acyl-L-alpha-aminoacyl-tRNA + H2O = an N-acyl-L-amino acid + a tRNA + H(+). In terms of biological role, the natural substrate for this enzyme may be peptidyl-tRNAs which drop off the ribosome during protein synthesis. The protein is Peptidyl-tRNA hydrolase of Methanothermobacter thermautotrophicus (strain ATCC 29096 / DSM 1053 / JCM 10044 / NBRC 100330 / Delta H) (Methanobacterium thermoautotrophicum).